A 95-amino-acid polypeptide reads, in one-letter code: Aspartyl/glutamyl-tRNA(Asn/Gln) amidotransferase subunit C (95 aa).

This sequence belongs to the GatC family. In terms of assembly, heterotrimer of A, B and C subunits.

It carries out the reaction L-glutamyl-tRNA(Gln) + L-glutamine + ATP + H2O = L-glutaminyl-tRNA(Gln) + L-glutamate + ADP + phosphate + H(+). The catalysed reaction is L-aspartyl-tRNA(Asn) + L-glutamine + ATP + H2O = L-asparaginyl-tRNA(Asn) + L-glutamate + ADP + phosphate + 2 H(+). Allows the formation of correctly charged Asn-tRNA(Asn) or Gln-tRNA(Gln) through the transamidation of misacylated Asp-tRNA(Asn) or Glu-tRNA(Gln) in organisms which lack either or both of asparaginyl-tRNA or glutaminyl-tRNA synthetases. The reaction takes place in the presence of glutamine and ATP through an activated phospho-Asp-tRNA(Asn) or phospho-Glu-tRNA(Gln). This chain is Aspartyl/glutamyl-tRNA(Asn/Gln) amidotransferase subunit C, found in Prochlorococcus marinus (strain NATL2A).